We begin with the raw amino-acid sequence, 248 residues long: Probable phosphatase VFMJ11_A0091 (248 aa).

Zn(2+)-binding residues include histidine 8, histidine 10, histidine 16, histidine 41, glutamate 74, histidine 102, histidine 132, aspartate 194, and histidine 196.

It belongs to the PHP family. Zn(2+) serves as cofactor.

The protein is Probable phosphatase VFMJ11_A0091 of Aliivibrio fischeri (strain MJ11) (Vibrio fischeri).